Consider the following 307-residue polypeptide: Transcription factor bHLH127 (307 aa).

Disordered regions lie at residues 41–68 and 101–155; these read SDPL…LPHQ and PHPQ…AEMH. A compositionally biased stretch (pro residues) spans 110–119; that stretch reads APPPPKPPSS. In terms of domain architecture, bHLH spans 150 to 199; it reads RAAEMHNLAERRRREKINERMKTLQQLIPRCNKSTKVSMLEDVIEYVKSL.

Belongs to the bHLH protein family. Homodimer.

The protein resides in the nucleus. This Arabidopsis thaliana (Mouse-ear cress) protein is Transcription factor bHLH127 (BHLH127).